The chain runs to 686 residues: Calponin homology and LIM domain-containing protein (686 aa).

One can recognise a Calponin-homology (CH) domain in the interval 15-120 (ELALDESRDW…ITLYWLGRAA (106 aa)). LIM zinc-binding domains follow at residues 139 to 200 (MNCS…ATNL) and 219 to 279 (NKCS…SCGK). Over residues 305–314 (KQVMDKDGHD) the composition is skewed to basic and acidic residues. The interval 305-345 (KQVMDKDGHDHHHHNHNKPTTTTTTTNSNSPLAKKKSDSCK) is disordered. Low complexity predominate over residues 322–333 (KPTTTTTTTNSN). LIM zinc-binding domains are found at residues 373–435 (GTCG…NNKS), 437–495 (KNCH…LNQY), 519–579 (DRCV…IQQS), and 583–658 (DHCA…ASSS).

In terms of assembly, interacts with limF and rab21.

In terms of biological role, involved in the regulation of phagocytosis. May repress rab21. This is Calponin homology and LIM domain-containing protein (ChLim) from Dictyostelium discoideum (Social amoeba).